Here is a 928-residue protein sequence, read N- to C-terminus: Neuropilin-1 (928 aa).

The first 21 residues, 1 to 21, serve as a signal peptide directing secretion; it reads MLLRLLSCCCWLLCSLRSSWA. The Extracellular portion of the chain corresponds to 22-860; sequence SRNDKCGDTI…PGNVLKTLDP (839 aa). Disulfide bonds link C27–C54, C82–C104, and C147–C173. 2 consecutive CUB domains span residues 27 to 141 and 147 to 265; these read CGDT…YEVF and CSRN…FSVV. N150 carries N-linked (GlcNAc...) asparagine glycosylation. Residues E195, D209, and D250 each contribute to the Ca(2+) site. An intrachain disulfide couples C206 to C228. N-linked (GlcNAc...) asparagine glycosylation is found at N261, N300, and N523. 2 disulfides stabilise this stretch: C275–C424 and C431–C584. F5/8 type C domains are found at residues 275-424 and 431-584; these read CKEA…LYGC and CSRM…LLGC. Residue S613 is glycosylated (O-linked (Xyl...) (chondroitin sulfate) serine; alternate). A glycan (O-linked (Xyl...) (heparan sulfate) serine; alternate) is linked at S613. Positions 624-645 are disordered; it reads GATGQSTETPTVEASPEEPDMT. A compositionally biased stretch (polar residues) spans 625–635; the sequence is ATGQSTETPTV. One can recognise an MAM domain in the interval 646-812; the sequence is HSDLDCKFGW…NHISPSQCRA (167 aa). O-linked (Xyl...) (chondroitin sulfate) serine glycosylation occurs at S834. Residue N844 is glycosylated (N-linked (GlcNAc...) asparagine). The helical transmembrane segment at 861-883 threads the bilayer; the sequence is ILITIIAMSALGVLLGAICGVVL. Residues 884–928 lie on the Cytoplasmic side of the membrane; sequence YCACWHNGMSERNLSALENYNFELVDGVKLKKDKLNTQNSYSEAS.

Belongs to the neuropilin family. As to quaternary structure, homodimer, and heterodimer. In terms of tissue distribution, retinal ganglion cells and visual center neurons.

It is found in the mitochondrion membrane. The protein resides in the cell membrane. Its function is as follows. Receptor involved in the development of the cardiovascular system, in angiogenesis, in the formation of certain neuronal circuits and in organogenesis outside the nervous system. Mediates the chemorepulsant activity of semaphorins. Binding to VEGFA initiates a signaling pathway needed for motor neuron axon guidance and cell body migration, including for the caudal migration of facial motor neurons from rhombomere 4 to rhombomere 6 during embryonic development. Regulates mitochondrial iron transport via interaction. This chain is Neuropilin-1 (nrp1), found in Xenopus laevis (African clawed frog).